The primary structure comprises 160 residues: Transcription elongation factor GreA (160 aa).

The stretch at 1 to 72 forms a coiled coil; the sequence is MAEKTYPMTL…QISSLETKIR (72 aa).

The protein belongs to the GreA/GreB family.

Functionally, necessary for efficient RNA polymerase transcription elongation past template-encoded arresting sites. The arresting sites in DNA have the property of trapping a certain fraction of elongating RNA polymerases that pass through, resulting in locked ternary complexes. Cleavage of the nascent transcript by cleavage factors such as GreA or GreB allows the resumption of elongation from the new 3'terminus. GreA releases sequences of 2 to 3 nucleotides. The chain is Transcription elongation factor GreA from Streptococcus sanguinis (strain SK36).